A 315-amino-acid chain; its full sequence is Olfactory receptor 5AN6 (315 aa).

Residues 1 to 29 (MPGGRNSTVITKFILVGFSDFPKLKLVLF) lie on the Extracellular side of the membrane. A helical transmembrane segment spans residues 30–50 (VIFLGSYLSTVVWNLGLIILI). Over 51–54 (RIDP) the chain is Cytoplasmic. A helical membrane pass occupies residues 55-75 (YLHTPMYFFLSNLSFLDFCYI). Residues 76–99 (SSTTPKMLSGFFQKSKSISFVGCT) lie on the Extracellular side of the membrane. Cys-98 and Cys-180 form a disulfide bridge. Residues 100-120 (MQYFIFSSLGLSECCLLAAMA) traverse the membrane as a helical segment. Over 121–123 (YDR) the chain is Cytoplasmic. Residues 124–143 (YAAICNPLLYTAIMSPSLCV) form a helical membrane-spanning segment. Residue His-144 is a topological domain, extracellular. A helical membrane pass occupies residues 145–165 (MVVGAYSTGLLGSLIQLCAIL). Residues 166-202 (QLHFCGPNIINHFFCDLPQLLVLSCSETFPLQVLKFV) lie on the Cytoplasmic side of the membrane. The helical transmembrane segment at 203–223 (IAVIFGVASVIVILISYGYII) threads the bilayer. Over 224-240 (GTILNISSVEGRSKAFN) the chain is Extracellular. Residues 241-261 (TCASHLTAVTLFFGSGLFVYM) traverse the membrane as a helical segment. The Cytoplasmic segment spans residues 262-272 (RPSSNSSQGYD). The helical transmembrane segment at 273-293 (KMASVFYTVVIPMLNPLIYSL) threads the bilayer. Residues 294 to 315 (RNKEIKDALQRCKNKCFSQCHC) are Extracellular-facing.

It belongs to the G-protein coupled receptor 1 family. As to expression, localized in the dorsomedial and ventral region of the olfactory bulb.

Its subcellular location is the cell membrane. Odorant receptor specific for muscone. Muscone-binding causes a conformation change that triggers signaling via G(s)-class of G alpha protein GNAL, activating adenylyl cyclase. The polypeptide is Olfactory receptor 5AN6 (Mus musculus (Mouse)).